A 237-amino-acid polypeptide reads, in one-letter code: Ribosomal RNA large subunit methyltransferase E (237 aa).

Gly76, Trp78, Asp99, Asp115, and Asp139 together coordinate S-adenosyl-L-methionine. Catalysis depends on Lys179, which acts as the Proton acceptor.

The protein belongs to the class I-like SAM-binding methyltransferase superfamily. RNA methyltransferase RlmE family.

It is found in the cytoplasm. The catalysed reaction is uridine(2552) in 23S rRNA + S-adenosyl-L-methionine = 2'-O-methyluridine(2552) in 23S rRNA + S-adenosyl-L-homocysteine + H(+). Its function is as follows. Specifically methylates the uridine in position 2552 of 23S rRNA at the 2'-O position of the ribose in the fully assembled 50S ribosomal subunit. This is Ribosomal RNA large subunit methyltransferase E from Rhodopseudomonas palustris (strain ATCC BAA-98 / CGA009).